The chain runs to 1026 residues: DNA cross-link repair 1A protein (1026 aa).

The tract at residues 1–189 (MLEDTWEEEI…RDSKEPLGSP (189 aa)) is nuclear localization region. Residues 12–110 (EYKSKRKPKP…HRTRRGKQVT (99 aa)) are disordered. Residues 34 to 65 (SVEKSTDGKHQSKGNEKRTSENPGKTKDHKVC) are compositionally biased toward basic and acidic residues. Low complexity predominate over residues 71 to 82 (SQISAGSSQSSS). The segment covering 98–107 (KKQHRTRRGK) has biased composition (basic residues). Residues 118–148 (DGYCPSCQMPFSSLLGQTPQWHVFECLDSPP) form a UBZ4-type zinc finger. Cys121, Cys124, His139, and Cys143 together coordinate Zn(2+). Glycyl lysine isopeptide (Lys-Gly) (interchain with G-Cter in SUMO2) cross-links involve residues Lys359, Lys434, and Lys522. The tract at residues 401-602 (SQEDLPHTDA…SSLSDLEFDA (202 aa)) is nuclear focus formation. Disordered stretches follow at residues 474-542 (PLEK…SKKV), 560-590 (ETSLRESASEGPNVSPVVSPNQKRPRLCKRK), and 602-651 (AKNL…PELG). A compositionally biased stretch (low complexity) spans 527–540 (SPSSPKCSPSQPSK). Residues 569 to 581 (EGPNVSPVVSPNQ) show a composition bias toward polar residues. Phosphoserine is present on residues Ser574 and Ser578. Over residues 619-628 (RQHRRKRHKT) the composition is skewed to basic residues. A Glycyl lysine isopeptide (Lys-Gly) (interchain with G-Cter in SUMO2) cross-link involves residue Lys657.

The protein belongs to the DNA repair metallo-beta-lactamase (DRMBL) family. As to quaternary structure, binds constitutively to TP53BP1. Binds CDC27, which is itself a component of the anaphase promoting complex (APC). Binds PIAS1.

It localises to the nucleus. The enzyme catalyses a beta-lactam + H2O = a substituted beta-amino acid. May be required for DNA interstrand cross-link repair. Also required for checkpoint mediated cell cycle arrest in early prophase in response to mitotic spindle poisons. The polypeptide is DNA cross-link repair 1A protein (Dclre1a) (Mus musculus (Mouse)).